The primary structure comprises 198 residues: Glycerol-3-phosphate acyltransferase (198 aa).

6 helical membrane passes run 5 to 25 (YLII…SIAI), 55 to 75 (VGLA…YLGF), 79 to 99 (GSLG…LPVL), 114 to 134 (VLLF…LIVV), 139 to 159 (YVSL…LIYI), and 164 to 184 (YIGL…RSNI).

Belongs to the PlsY family. As to quaternary structure, probably interacts with PlsX.

The protein resides in the cell membrane. It catalyses the reaction an acyl phosphate + sn-glycerol 3-phosphate = a 1-acyl-sn-glycero-3-phosphate + phosphate. Its pathway is lipid metabolism; phospholipid metabolism. Its function is as follows. Catalyzes the transfer of an acyl group from acyl-phosphate (acyl-PO(4)) to glycerol-3-phosphate (G3P) to form lysophosphatidic acid (LPA). This enzyme utilizes acyl-phosphate as fatty acyl donor, but not acyl-CoA or acyl-ACP. The sequence is that of Glycerol-3-phosphate acyltransferase from Finegoldia magna (strain ATCC 29328 / DSM 20472 / WAL 2508) (Peptostreptococcus magnus).